Reading from the N-terminus, the 100-residue chain is Signal recognition particle 19 kDa protein (100 aa).

It belongs to the SRP19 family. As to quaternary structure, part of the signal recognition particle protein translocation system, which is composed of SRP and FtsY. Archaeal SRP consists of a 7S RNA molecule of 300 nucleotides and two protein subunits: SRP54 and SRP19.

It localises to the cytoplasm. Functionally, involved in targeting and insertion of nascent membrane proteins into the cytoplasmic membrane. Binds directly to 7S RNA and mediates binding of the 54 kDa subunit of the SRP. The sequence is that of Signal recognition particle 19 kDa protein from Pyrococcus furiosus (strain ATCC 43587 / DSM 3638 / JCM 8422 / Vc1).